The primary structure comprises 265 residues: uncharacterized protein (265 aa).

Positions 143–205 form a coiled coil; it reads ATQKALKDSI…EKLIKSVEKA (63 aa).

This is an uncharacterized protein from Aquifex aeolicus (strain VF5).